The sequence spans 422 residues: MEKNEKIHADMQALGRAACAAARIVAKADTATKNHALAMMARAIRRDEALLLAANAKDVAQARNKGLESAMIDRLTLTSRGVVSMATGLEQIATLPDPIGAMTDLDYRPSGIQVGKMRVPLGVIGIIYEARPNVTADAAGLCLKAGNAAILRGGSEAIQSNQAIAICVREGLRSAGLPEQTMQVVETTDRAAVSALITMSEYVDVIVPRGGKGLIERITNEARVPVIKHLDGVCHVYVDLSADLEKAVRVADNAKTQRYGTCNTMETLLVHTGIAEQFLPRICQIFLEKEVELRGDEAACALVSRMKPAVEEDWYAEYLAPILSVRIVADIDEAITHIATYGSQHTDTIVTENYSRARQFLREVDSSSVMVNASTRFADGFEYGLGAEIGISTDKLHARGPVGLEGLTSQKFIVLGDGHIRE.

It belongs to the gamma-glutamyl phosphate reductase family.

The protein resides in the cytoplasm. It carries out the reaction L-glutamate 5-semialdehyde + phosphate + NADP(+) = L-glutamyl 5-phosphate + NADPH + H(+). The protein operates within amino-acid biosynthesis; L-proline biosynthesis; L-glutamate 5-semialdehyde from L-glutamate: step 2/2. Functionally, catalyzes the NADPH-dependent reduction of L-glutamate 5-phosphate into L-glutamate 5-semialdehyde and phosphate. The product spontaneously undergoes cyclization to form 1-pyrroline-5-carboxylate. This Nitrosomonas eutropha (strain DSM 101675 / C91 / Nm57) protein is Gamma-glutamyl phosphate reductase.